Consider the following 547-residue polypeptide: TBCC domain-containing protein 1 (547 aa).

A C-CAP/cofactor C-like domain is found at 304–435 (PHTHRMVVMS…LEDHMAHTGL (132 aa)).

It belongs to the TBCC family.

The protein resides in the cytoplasm. It localises to the cytoskeleton. The protein localises to the microtubule organizing center. Its subcellular location is the centrosome. It is found in the spindle pole. May play a role in the regulation of centrosome and Golgi apparatus positioning. In Xenopus tropicalis (Western clawed frog), this protein is TBCC domain-containing protein 1 (tbccd1).